The following is a 610-amino-acid chain: MLKCIKHEYGIKNMKSIRNFSIIAHIDHGKSTLSDRLIQLCGGLSEREMSNQVLDSMDLEKERGITIKAQSVMIDYKNKSGNIFNLNFIDTPGHVDFSYEVSRSLAACEGALLVVDSTQGVEAQTLANCYTAIDMNVEIVPVLNKIDLPNSNADKVAKEIEDIIGIPALDAIRCSAKTGEGIEDLIERIINDIPYPKGSINSPLQALIIDSWFDNYLGVVSLIRIKNGILFEKDKIQVMSTGKNYYVDQIGVFTPKKLNKNQLRCGEVGWIICGIKNIIAAPVGDTLTTAKNPAKNMIIGFKKIKPQIYAGLFPLTSDQYEMFRDALGKLSLNDASLFYEPENSVALGFGFRCGFLGVLHMEIIQARLEREYSIDLITTIPTVIYEIELINGKIIYLDTPSNFPNMNDIKIIKEPIVECSILSPPQFLGSIIKLCIKKRGVQINMVYHSHQVLLKYNIPMNEVILNFFDELKSVSSGYASLEYDFKYFQSVKMVRIDILINSEKVDALTILSYHKNAQSRSREIVDKMKKLIPRHQFDISIQAVINNSVIARSTIKQLRKNVLSKCYGGDVSRKKKLLQKQKDGKKRMKKIGNVNVPKTVFLSILNSRES.

In terms of domain architecture, tr-type G spans 15 to 197 (KSIRNFSIIA…RIINDIPYPK (183 aa)). Residues 27–32 (DHGKST) and 144–147 (NKID) contribute to the GTP site.

Belongs to the TRAFAC class translation factor GTPase superfamily. Classic translation factor GTPase family. LepA subfamily.

It is found in the cell membrane. The enzyme catalyses GTP + H2O = GDP + phosphate + H(+). Functionally, required for accurate and efficient protein synthesis under certain stress conditions. May act as a fidelity factor of the translation reaction, by catalyzing a one-codon backward translocation of tRNAs on improperly translocated ribosomes. Back-translocation proceeds from a post-translocation (POST) complex to a pre-translocation (PRE) complex, thus giving elongation factor G a second chance to translocate the tRNAs correctly. Binds to ribosomes in a GTP-dependent manner. The polypeptide is Elongation factor 4 (Buchnera aphidicola subsp. Acyrthosiphon pisum (strain 5A)).